The chain runs to 177 residues: Nuclear export protein (177 aa).

2 consecutive short sequence motifs (nuclear export signal) follow at residues 91–100 (LWLPMKSLSL) and 117–127 (MKHQILTRLKL).

In terms of assembly, binds M1 protein. May interact with human nucleoporins and exportin XPO1/CRM1.

The protein localises to the virion. Its subcellular location is the host nucleus. Mediates the nuclear export of encapsidated genomic RNAs (ribonucleoproteins, RNPs). Acts as an adapter between viral RNPs complexes and the nuclear export machinery of the cell. Possesses no intrinsic RNA-binding activity, but includes a C-terminal M1-binding domain. This domain is believed to allow recognition of RNPs to which the M1 protein is bound. Because the M1 protein is not available in large quantities until the later stages of infection, such an indirect recognition mechanism probably ensures that genomic RNPs are not exported from the nucleus before sufficient quantities of viral mRNA and progeny genomic RNA have been synthesized. Furthermore, the RNPs enters the cytoplasm only when they have associated with the M1 protein that is necessary to guide them to the plasma membrane. May down-regulate viral RNA synthesis when overproduced. The sequence is that of Nuclear export protein (NS) from Homo sapiens (Human).